Reading from the N-terminus, the 235-residue chain is Eukaryotic translation initiation factor 4E-1 (235 aa).

The tract at residues 1 to 36 (MVVEETIKATSTEDLSNTIANQNPRGRGGDEDEELE) is disordered. Over residues 8-24 (KATSTEDLSNTIANQNP) the composition is skewed to polar residues. EIF4G-binding stretches follow at residues 60–63 (HPLE) and 70–106 (FDNP…NNIH). Residues 78–83 (KQATWG), Lys-110, and 128–129 (WE) contribute to the mRNA site. Cys-133 and Cys-171 are disulfide-bonded. The EIF4G-binding stretch occupies residues 154–163 (YTLLAMIGEQ). MRNA contacts are provided by residues 178 to 183 (RSGQDK) and 223 to 227 (KKFDR).

It belongs to the eukaryotic initiation factor 4E family. EIF4F is a multi-subunit complex, the composition of which varies with external and internal environmental conditions. It is composed of at least EIF4A, EIF4E and EIF4G. EIF4E is also known to interact with other partners. In higher plants two isoforms of EIF4F have been identified, named isoform EIF4F and isoform EIF(iso)4F. Isoform EIF4F has subunits p220 and p26, whereas isoform EIF(iso)4F has subunits p82 and p28. As to quaternary structure, (Microbial infection) Interacts with potyvirus viral genome-linked protein (VPg); this interaction is possible in susceptible hosts but impaired in resistant plants. According to the redox status, the Cys-133-Cys-171 disulfide bridge may have a role in regulating protein function by affecting its ability to bind capped mRNA.

It is found in the nucleus. It localises to the cytoplasm. Component of the protein complex eIF4F, which is involved in the recognition of the mRNA cap, ATP-dependent unwinding of 5'-terminal secondary structure and recruitment of mRNA to the ribosome. Recognizes and binds the 7-methylguanosine-containing mRNA cap during an early step in the initiation of protein synthesis and facilitates ribosome binding by inducing the unwinding of the mRNAs secondary structures. Key component of recessive resistance to potyviruses. In terms of biological role, (Microbial infection) Susceptibility host factor required for viral infection by recruiting viral RNAs to the host ribosomal complex via an interaction with viral genome-linked protein (VPg). The chain is Eukaryotic translation initiation factor 4E-1 from Citrullus lanatus (Watermelon).